The chain runs to 339 residues: Methylthioribose-1-phosphate isomerase (339 aa).

Residues 52-54 (RGA), Arg-89, and Gln-188 contribute to the substrate site. Asp-229 (proton donor) is an active-site residue. Residue 239-240 (NK) participates in substrate binding.

The protein belongs to the eIF-2B alpha/beta/delta subunits family. MtnA subfamily.

It carries out the reaction 5-(methylsulfanyl)-alpha-D-ribose 1-phosphate = 5-(methylsulfanyl)-D-ribulose 1-phosphate. Its pathway is amino-acid biosynthesis; L-methionine biosynthesis via salvage pathway; L-methionine from S-methyl-5-thio-alpha-D-ribose 1-phosphate: step 1/6. Catalyzes the interconversion of methylthioribose-1-phosphate (MTR-1-P) into methylthioribulose-1-phosphate (MTRu-1-P). In Anaeromyxobacter dehalogenans (strain 2CP-C), this protein is Methylthioribose-1-phosphate isomerase.